The sequence spans 339 residues: D-erythrose-4-phosphate dehydrogenase (339 aa).

Residues 12-13 (RI) and Arg-81 each bind NAD(+). Substrate-binding positions include 154-156 (SCT), Arg-200, 213-214 (TK), and Arg-236. The active-site Nucleophile is Cys-155. Asn-318 contacts NAD(+).

Belongs to the glyceraldehyde-3-phosphate dehydrogenase family. Epd subfamily. In terms of assembly, homotetramer.

The protein resides in the cytoplasm. The enzyme catalyses D-erythrose 4-phosphate + NAD(+) + H2O = 4-phospho-D-erythronate + NADH + 2 H(+). Its pathway is cofactor biosynthesis; pyridoxine 5'-phosphate biosynthesis; pyridoxine 5'-phosphate from D-erythrose 4-phosphate: step 1/5. Catalyzes the NAD-dependent conversion of D-erythrose 4-phosphate to 4-phosphoerythronate. This Escherichia coli (strain UTI89 / UPEC) protein is D-erythrose-4-phosphate dehydrogenase.